Reading from the N-terminus, the 88-residue chain is Small ribosomal subunit protein bS20 (88 aa).

The tract at residues Met-1–Met-27 is disordered.

Belongs to the bacterial ribosomal protein bS20 family.

Its function is as follows. Binds directly to 16S ribosomal RNA. The chain is Small ribosomal subunit protein bS20 from Shewanella baltica (strain OS223).